The sequence spans 946 residues: DNA primase (946 aa).

Residues 596–626 (RDTEEDEDGKENKNNVPDNGVFQKTTSSVDT) are disordered. Positions 617 to 626 (FQKTTSSVDT) are enriched in polar residues. Residues 881-920 (CLNYTHRNPQETVQVFIDLRTEHSYALWASLWSRCFTKKC) form a CHC2-type zinc finger.

This sequence belongs to the herpesviridae DNA primase family. As to quaternary structure, associates with the helicase and the primase-associated factor to form the helicase-primase factor. Interacts with host SNAPIN.

It localises to the host nucleus. Functionally, essential component of the helicase/primase complex. Unwinds the DNA at the replication forks and generates single-stranded DNA for both leading and lagging strand synthesis. The primase initiates primer synthesis and thereby produces large amount of short RNA primers on the lagging strand that the polymerase elongates using dNTPs. This chain is DNA primase (UL70), found in Homo sapiens (Human).